The chain runs to 284 residues: D-tagatose-1,6-bisphosphate aldolase subunit GatY (284 aa).

Residue Asp82 is the Proton donor of the active site. Positions 83 and 180 each coordinate Zn(2+). Gly181 provides a ligand contact to dihydroxyacetone phosphate. His208 contributes to the Zn(2+) binding site. Residues 209 to 211 and 230 to 233 each bind dihydroxyacetone phosphate; these read GAS and NVAT.

The protein belongs to the class II fructose-bisphosphate aldolase family. TagBP aldolase GatY subfamily. As to quaternary structure, forms a complex with GatZ. Requires Zn(2+) as cofactor.

It carries out the reaction D-tagatofuranose 1,6-bisphosphate = D-glyceraldehyde 3-phosphate + dihydroxyacetone phosphate. The protein operates within carbohydrate metabolism; D-tagatose 6-phosphate degradation; D-glyceraldehyde 3-phosphate and glycerone phosphate from D-tagatose 6-phosphate: step 2/2. Its function is as follows. Catalytic subunit of the tagatose-1,6-bisphosphate aldolase GatYZ, which catalyzes the reversible aldol condensation of dihydroxyacetone phosphate (DHAP or glycerone-phosphate) with glyceraldehyde 3-phosphate (G3P) to produce tagatose 1,6-bisphosphate (TBP). Requires GatZ subunit for full activity and stability. Is involved in the catabolism of galactitol. This is D-tagatose-1,6-bisphosphate aldolase subunit GatY from Salmonella enteritidis PT4 (strain P125109).